Consider the following 169-residue polypeptide: Transcription antitermination protein NusB (169 aa).

Over residues 1–19 the composition is skewed to basic and acidic residues; sequence MAEMKKTIDNKPAPKGEKK. A disordered region spans residues 1–22; the sequence is MAEMKKTIDNKPAPKGEKKANR.

It belongs to the NusB family.

In terms of biological role, involved in transcription antitermination. Required for transcription of ribosomal RNA (rRNA) genes. Binds specifically to the boxA antiterminator sequence of the ribosomal RNA (rrn) operons. The sequence is that of Transcription antitermination protein NusB from Rhodopseudomonas palustris (strain BisB18).